Reading from the N-terminus, the 263-residue chain is MSGKDDYYNRAKQEGYRARSAYKLQQLDDTAGLLGEGRTVVDLGAAPGGWMQVAAERIGERGTLVGVDRQTIDDLEDPEPTVEYVRGDMTEDSTKDEIREIVGESDGSGGPVDVVISDMAPNMTGQYDLDHARSVHLVRQAFEVATDLLDAGGDFCAKVFDGQDLDDLIADIEPEFEYVREVRPDASRDSSSELYLVAKHRLTGPVREGDIVEATIEDIGEEGDGIAKVENFTVFVSGVEDGETVEVRIDDVKPRYAFAEPVE.

G48, W50, D68, D88, and D118 together coordinate S-adenosyl-L-methionine. Catalysis depends on K158, which acts as the Proton acceptor. One can recognise a TRAM domain in the interval 205–263; the sequence is PVREGDIVEATIEDIGEEGDGIAKVENFTVFVSGVEDGETVEVRIDDVKPRYAFAEPVE.

It belongs to the class I-like SAM-binding methyltransferase superfamily. RNA methyltransferase RlmE family.

It is found in the cytoplasm. It carries out the reaction uridine(2552) in 23S rRNA + S-adenosyl-L-methionine = 2'-O-methyluridine(2552) in 23S rRNA + S-adenosyl-L-homocysteine + H(+). Functionally, specifically methylates the uridine in position 2552 of 23S rRNA at the 2'-O position of the ribose in the fully assembled 50S ribosomal subunit. The sequence is that of Ribosomal RNA large subunit methyltransferase E from Haloarcula marismortui (strain ATCC 43049 / DSM 3752 / JCM 8966 / VKM B-1809) (Halobacterium marismortui).